The sequence spans 480 residues: Ribosomal RNA small subunit methyltransferase F (480 aa).

S-adenosyl-L-methionine-binding positions include 126–132 (AAAPGSK), Glu150, Asp177, and Asp195. The Nucleophile role is filled by Cys248.

This sequence belongs to the class I-like SAM-binding methyltransferase superfamily. RsmB/NOP family.

Its subcellular location is the cytoplasm. The catalysed reaction is cytidine(1407) in 16S rRNA + S-adenosyl-L-methionine = 5-methylcytidine(1407) in 16S rRNA + S-adenosyl-L-homocysteine + H(+). Specifically methylates the cytosine at position 1407 (m5C1407) of 16S rRNA. In Cronobacter sakazakii (strain ATCC BAA-894) (Enterobacter sakazakii), this protein is Ribosomal RNA small subunit methyltransferase F.